Consider the following 617-residue polypeptide: 1-deoxy-D-xylulose-5-phosphate synthase (617 aa).

Thiamine diphosphate contacts are provided by residues histidine 76 and 117–119 (GHS). Aspartate 148 is a binding site for Mg(2+). Thiamine diphosphate is bound by residues 149–150 (GA), asparagine 177, tyrosine 285, and glutamate 366. Mg(2+) is bound at residue asparagine 177.

The protein belongs to the transketolase family. DXPS subfamily. As to quaternary structure, homodimer. Mg(2+) is required as a cofactor. Requires thiamine diphosphate as cofactor.

The enzyme catalyses D-glyceraldehyde 3-phosphate + pyruvate + H(+) = 1-deoxy-D-xylulose 5-phosphate + CO2. Its pathway is metabolic intermediate biosynthesis; 1-deoxy-D-xylulose 5-phosphate biosynthesis; 1-deoxy-D-xylulose 5-phosphate from D-glyceraldehyde 3-phosphate and pyruvate: step 1/1. Catalyzes the acyloin condensation reaction between C atoms 2 and 3 of pyruvate and glyceraldehyde 3-phosphate to yield 1-deoxy-D-xylulose-5-phosphate (DXP). In Histophilus somni (strain 129Pt) (Haemophilus somnus), this protein is 1-deoxy-D-xylulose-5-phosphate synthase.